Here is a 554-residue protein sequence, read N- to C-terminus: CTP synthase (554 aa).

The segment at 1-265 (MTPLIFVTGG…DELVIDQFKL (265 aa)) is amidoligase domain. Position 13 (S13) interacts with CTP. UTP is bound at residue S13. ATP-binding positions include 14–19 (SLGKGI) and D71. Mg(2+)-binding residues include D71 and E139. Residues 146–148 (DIE), 186–191 (KTKPTQ), and K222 contribute to the CTP site. UTP is bound by residues 186–191 (KTKPTQ) and K222. One can recognise a Glutamine amidotransferase type-1 domain in the interval 292–545 (TIAVVGKYVD…VRAAREKKAG (254 aa)). Position 353 (G353) interacts with L-glutamine. C380 serves as the catalytic Nucleophile; for glutamine hydrolysis. L-glutamine is bound by residues 381–384 (YGMQ), E404, and R471. Residues H518 and E520 contribute to the active site.

This sequence belongs to the CTP synthase family. In terms of assembly, homotetramer.

It carries out the reaction UTP + L-glutamine + ATP + H2O = CTP + L-glutamate + ADP + phosphate + 2 H(+). It catalyses the reaction L-glutamine + H2O = L-glutamate + NH4(+). The catalysed reaction is UTP + NH4(+) + ATP = CTP + ADP + phosphate + 2 H(+). The protein operates within pyrimidine metabolism; CTP biosynthesis via de novo pathway; CTP from UDP: step 2/2. Its activity is regulated as follows. Allosterically activated by GTP, when glutamine is the substrate; GTP has no effect on the reaction when ammonia is the substrate. The allosteric effector GTP functions by stabilizing the protein conformation that binds the tetrahedral intermediate(s) formed during glutamine hydrolysis. Inhibited by the product CTP, via allosteric rather than competitive inhibition. In terms of biological role, catalyzes the ATP-dependent amination of UTP to CTP with either L-glutamine or ammonia as the source of nitrogen. Regulates intracellular CTP levels through interactions with the four ribonucleotide triphosphates. This chain is CTP synthase, found in Xanthomonas campestris pv. campestris (strain B100).